A 202-amino-acid polypeptide reads, in one-letter code: Elongation factor Ts, chloroplastic (202 aa).

This sequence belongs to the EF-Ts family.

The protein resides in the plastid. The protein localises to the chloroplast. Its function is as follows. Associates with the EF-Tu.GDP complex and induces the exchange of GDP to GTP. It remains bound to the aminoacyl-tRNA.EF-Tu.GTP complex up to the GTP hydrolysis stage on the ribosome. The chain is Elongation factor Ts, chloroplastic (tsf) from Phaeodactylum tricornutum (strain CCAP 1055/1).